Here is a 324-residue protein sequence, read N- to C-terminus: Dehydrogenase/reductase SDR family member 7C-A (324 aa).

The N-terminal stretch at 1-17 is a signal peptide; sequence MAVPSVMVLPLLIVVFA. 41 to 65 provides a ligand contact to NAD(+); sequence VITDAVSGMGSECARLFHAGGARLV. Residue S178 participates in substrate binding. The active-site Proton acceptor is the Y191.

Belongs to the short-chain dehydrogenases/reductases (SDR) family.

The protein localises to the secreted. Putative oxidoreductase. This chain is Dehydrogenase/reductase SDR family member 7C-A (dhrs7ca), found in Danio rerio (Zebrafish).